Reading from the N-terminus, the 436-residue chain is D-amino acid dehydrogenase (436 aa).

Residue 3 to 17 (IVVLGAGVVGVTSAY) coordinates FAD.

The protein belongs to the DadA oxidoreductase family. Requires FAD as cofactor.

The catalysed reaction is a D-alpha-amino acid + A + H2O = a 2-oxocarboxylate + AH2 + NH4(+). It participates in amino-acid degradation; D-alanine degradation; NH(3) and pyruvate from D-alanine: step 1/1. Oxidative deamination of D-amino acids. In Cereibacter sphaeroides (strain ATCC 17029 / ATH 2.4.9) (Rhodobacter sphaeroides), this protein is D-amino acid dehydrogenase.